Reading from the N-terminus, the 123-residue chain is Small ribosomal subunit protein uS12 (123 aa).

At Asp89 the chain carries 3-methylthioaspartic acid.

Belongs to the universal ribosomal protein uS12 family. Part of the 30S ribosomal subunit. Contacts proteins S8 and S17. May interact with IF1 in the 30S initiation complex.

In terms of biological role, with S4 and S5 plays an important role in translational accuracy. Interacts with and stabilizes bases of the 16S rRNA that are involved in tRNA selection in the A site and with the mRNA backbone. Located at the interface of the 30S and 50S subunits, it traverses the body of the 30S subunit contacting proteins on the other side and probably holding the rRNA structure together. The combined cluster of proteins S8, S12 and S17 appears to hold together the shoulder and platform of the 30S subunit. This Syntrophus aciditrophicus (strain SB) protein is Small ribosomal subunit protein uS12.